The sequence spans 264 residues: Phosphatidylglycerol--prolipoprotein diacylglyceryl transferase (264 aa).

Helical transmembrane passes span 14–34 (IIFSIGPIALRWYGLMYLIGF), 60–80 (LIYTCFWGVILGGRIGDVFFY), 98–118 (GGMSFHGGLIGVIVAMIWVSF), 128–148 (ADFIAPLIPFGLGMGRIGNFI), 176–196 (SQLYEFFLEGVVLFFILNWFI), 203–223 (GSVAGLFLIGYGVFRFLVEYV), and 240–260 (GQLLSLPMIIGGLAIMIWAYS). Residue Arg-143 coordinates a 1,2-diacyl-sn-glycero-3-phospho-(1'-sn-glycerol).

The protein belongs to the Lgt family.

It is found in the cell inner membrane. The enzyme catalyses L-cysteinyl-[prolipoprotein] + a 1,2-diacyl-sn-glycero-3-phospho-(1'-sn-glycerol) = an S-1,2-diacyl-sn-glyceryl-L-cysteinyl-[prolipoprotein] + sn-glycerol 1-phosphate + H(+). It functions in the pathway protein modification; lipoprotein biosynthesis (diacylglyceryl transfer). Functionally, catalyzes the transfer of the diacylglyceryl group from phosphatidylglycerol to the sulfhydryl group of the N-terminal cysteine of a prolipoprotein, the first step in the formation of mature lipoproteins. This chain is Phosphatidylglycerol--prolipoprotein diacylglyceryl transferase, found in Actinobacillus pleuropneumoniae serotype 7 (strain AP76).